The following is a 349-amino-acid chain: Magnesium-protoporphyrin IX monomethyl ester [oxidative] cyclase (349 aa).

Low complexity predominate over residues 1–10 (MTATTATAPA). The disordered stretch occupies residues 1 to 23 (MTATTATAPAMRGGGRNELPPHL).

Belongs to the AcsF family. The cofactor is Fe cation.

It carries out the reaction Mg-protoporphyrin IX 13-monomethyl ester + 3 NADPH + 3 O2 + 2 H(+) = 3,8-divinyl protochlorophyllide a + 3 NADP(+) + 5 H2O. It participates in porphyrin-containing compound metabolism; chlorophyll biosynthesis (light-independent). Functionally, catalyzes the formation of the isocyclic ring in chlorophyll biosynthesis. Mediates the cyclase reaction, which results in the formation of divinylprotochlorophyllide (Pchlide) characteristic of all chlorophylls from magnesium-protoporphyrin IX 13-monomethyl ester (MgPMME). This Prochlorococcus marinus (strain MIT 9303) protein is Magnesium-protoporphyrin IX monomethyl ester [oxidative] cyclase.